Consider the following 260-residue polypeptide: Putative cysteine-rich repeat secretory protein 23 (260 aa).

A signal peptide spans 1–31; that stretch reads MSSSFVYKSLFLVPILAVVAMQLSFVQSVLS. 2 Gnk2-homologous domains span residues 38–136 and 142–254; these read YLHH…NISY and LPEQ…LYLF.

Belongs to the cysteine-rich repeat secretory protein family.

The protein localises to the secreted. This chain is Putative cysteine-rich repeat secretory protein 23 (CRRSP23), found in Arabidopsis thaliana (Mouse-ear cress).